A 131-amino-acid chain; its full sequence is POU domain, class 3, transcription factor 3 (131 aa).

One can recognise a POU-specific domain in the interval 1-60 (FTQRRMKLGFTQADVGLALGTLYGNVFSQTTICRFEALQLSFKNMCKLKPLLNKWLEEAD). The homeobox DNA-binding region spans 78–131 (KRKKRTSIEVSVKGALESHFLKCPKPSAQEITNLADSLQLEKEVVRVWFCNNLQ).

Belongs to the POU transcription factor family. Class-3 subfamily. In terms of assembly, homodimer. In terms of tissue distribution, brain.

The protein localises to the nucleus. Transcription factor that acts synergistically with SOX11 and SOX4. Plays a role in neuronal development. Is implicated in an enhancer activity at the embryonic met-mesencephalic junction; the enhancer element contains the octamer motif (5'-ATTTGCAT-3'). The protein is POU domain, class 3, transcription factor 3 (POU3F3) of Sus scrofa (Pig).